Reading from the N-terminus, the 201-residue chain is Small ribosomal subunit protein uS4 (201 aa).

The S4 RNA-binding domain maps to 91 to 151 (SRLDNVVYRA…DKSINTLPFE (61 aa)).

The protein belongs to the universal ribosomal protein uS4 family. In terms of assembly, part of the 30S ribosomal subunit. Contacts protein S5. The interaction surface between S4 and S5 is involved in control of translational fidelity.

In terms of biological role, one of the primary rRNA binding proteins, it binds directly to 16S rRNA where it nucleates assembly of the body of the 30S subunit. Its function is as follows. With S5 and S12 plays an important role in translational accuracy. This chain is Small ribosomal subunit protein uS4, found in Mycolicibacterium gilvum (strain PYR-GCK) (Mycobacterium gilvum (strain PYR-GCK)).